A 574-amino-acid polypeptide reads, in one-letter code: Putative thiamine pyrophosphate-containing protein YdaP (574 aa).

Positions 28–55 form a coiled coil; it reads DSINEFIEELRHERNQLKFIQTRHEEVA. Residue glutamate 52 participates in thiamine diphosphate binding. Residues 256–277 and 294–313 each bind FAD; these read IGTKPAYEAMEECDLLIMLGTS and DSDPAKIGKRYPVTAGLVCD. The interval 384–464 is thiamine pyrophosphate binding; it reads TVTVWMARHF…ITVVILNNEN (81 aa). Residues aspartate 435 and asparagine 462 each contribute to the Mg(2+) site.

It belongs to the TPP enzyme family. The cofactor is Mg(2+). Requires thiamine diphosphate as cofactor.

This Bacillus subtilis (strain 168) protein is Putative thiamine pyrophosphate-containing protein YdaP (ydaP).